The chain runs to 82 residues: Sigma-G-dependent sporulation-specific SASP protein (82 aa).

In Bacillus subtilis (strain 168), this protein is Sigma-G-dependent sporulation-specific SASP protein.